Consider the following 466-residue polypeptide: UDP-N-acetylmuramoylalanine--D-glutamate ligase (466 aa).

An ATP-binding site is contributed by 115-121 (GTDGKTT).

This sequence belongs to the MurCDEF family.

It localises to the cytoplasm. The catalysed reaction is UDP-N-acetyl-alpha-D-muramoyl-L-alanine + D-glutamate + ATP = UDP-N-acetyl-alpha-D-muramoyl-L-alanyl-D-glutamate + ADP + phosphate + H(+). It participates in cell wall biogenesis; peptidoglycan biosynthesis. Its function is as follows. Cell wall formation. Catalyzes the addition of glutamate to the nucleotide precursor UDP-N-acetylmuramoyl-L-alanine (UMA). The polypeptide is UDP-N-acetylmuramoylalanine--D-glutamate ligase (Chlorobium phaeobacteroides (strain BS1)).